The following is a 931-amino-acid chain: Beta-mannosidase A (931 aa).

Residues 1 to 21 form the signal peptide; that stretch reads MRHSIGLAAALLAPTLPVALG. N-linked (GlcNAc...) asparagine glycosylation is found at asparagine 40, asparagine 79, asparagine 247, asparagine 282, asparagine 316, asparagine 326, and asparagine 347. The Proton donor role is filled by glutamate 479. Residues asparagine 550, asparagine 608, asparagine 658, asparagine 738, asparagine 790, asparagine 798, asparagine 830, and asparagine 918 are each glycosylated (N-linked (GlcNAc...) asparagine).

The protein belongs to the glycosyl hydrolase 2 family. Beta-mannosidase A subfamily. Homodimer.

Its subcellular location is the secreted. The enzyme catalyses Hydrolysis of terminal, non-reducing beta-D-mannose residues in beta-D-mannosides.. The protein operates within glycan metabolism; N-glycan degradation. Its function is as follows. Exoglycosidase that cleaves the single beta-linked mannose residue from the non-reducing end of beta-mannosidic oligosaccharides of various complexity and length. Involved in the degradation of polymeric mannan and galactomannan. In Aspergillus niger (strain ATCC MYA-4892 / CBS 513.88 / FGSC A1513), this protein is Beta-mannosidase A (mndA).